We begin with the raw amino-acid sequence, 326 residues long: Probable 9-O-acetyl-N-acetylneuraminic acid deacetylase (326 aa).

The signal sequence occupies residues 1–21 (MNAIISPDYYYVLTVAGQSNA).

It is found in the periplasm. Functionally, probably catalyzes the hydrolysis of the 9-O-acetyl group of 9-O-acetyl-N-acetylneuraminate (Neu5,9Ac2). Is required for growth of E.coli on Neu5,9Ac2, an alternative sialic acid commonly found in mammalian host mucosal sites, in particular in the human intestine. The sequence is that of Probable 9-O-acetyl-N-acetylneuraminic acid deacetylase (nanS) from Escherichia coli (strain K12).